A 515-amino-acid polypeptide reads, in one-letter code: ATP-dependent RNA helicase DBP3 (515 aa).

The tract at residues 1 to 67 is disordered; it reads MAKRPLQTEA…SDSRYLPTPE (67 aa). Residues 100 to 127 carry the Q motif motif; that stretch reads TSFSFLPESSNDLYLPLEKFSSPTPIQA. One can recognise a Helicase ATP-binding domain in the interval 130–306; sequence WPLAFAGRDL…ASFTKNPVTV (177 aa). 143 to 150 is a binding site for ATP; sequence AETGSGKT. A DEAD box motif is present at residues 252–255; it reads DEAD. Positions 335–484 constitute a Helicase C-terminal domain; the sequence is RLLELLRRYQ…DVPESLLKFG (150 aa).

This sequence belongs to the DEAD box helicase family. DDX5/DBP2 subfamily.

The protein resides in the nucleus. Its subcellular location is the nucleolus. It catalyses the reaction ATP + H2O = ADP + phosphate + H(+). ATP-dependent RNA helicase required for 60S ribosomal subunit synthesis. Involved in efficient pre-rRNA processing, predominantly at site A3, which is necessary for the normal formation of 25S and 5.8S rRNAs. The sequence is that of ATP-dependent RNA helicase DBP3 (DBP3) from Coccidioides immitis (strain RS) (Valley fever fungus).